The following is an 88-amino-acid chain: Carboxysome shell vertex protein CsoS4A (88 aa).

Residues 1 to 76 enclose the BMV domain; that stretch reads MLICKVLKPL…SDLTIVGIID (76 aa).

The protein belongs to the CcmL/EutN family. CsoS4 subfamily. Homopentamer.

It is found in the carboxysome. Probably forms vertices in the carboxysome, a polyhedral inclusion where RuBisCO (ribulose bisphosphate carboxylase, cbbL-cbbS) is sequestered. Has been modeled to induce curvature upon insertion into an otherwise flat hexagonal layer of major carboxysome subunits. Has not been identified in purified carboxysomes; it is expected to be present in very low amounts. The sequence is that of Carboxysome shell vertex protein CsoS4A from Prochlorococcus marinus subsp. pastoris (strain CCMP1986 / NIES-2087 / MED4).